A 450-amino-acid chain; its full sequence is Sulfite exporter TauE/SafE family protein 1 (450 aa).

12 consecutive transmembrane segments (helical) span residues 5–25 (LVPL…SALA), 48–68 (TIEV…AASI), 70–90 (SAGG…IAGL), 97–117 (SFSA…NLFL), 130–150 (FDLA…GVIC), 153–173 (MFPN…STMK), 223–243 (FPWM…SINL), 261–281 (ALYW…TLCI), 316–336 (VMAL…GMLI), 340–360 (LLQI…MVLF), 378–398 (GTAA…LMVV), and 408–428 (ASII…LMTT).

Belongs to the 4-toluene sulfonate uptake permease (TSUP) (TC 2.A.102) family.

It localises to the membrane. The chain is Sulfite exporter TauE/SafE family protein 1 from Arabidopsis thaliana (Mouse-ear cress).